A 1123-amino-acid chain; its full sequence is Ubiquitin carboxyl-terminal hydrolase 36 (1123 aa).

2 stretches are compositionally biased toward basic and acidic residues: residues 1-19 (MPIV…KDSA) and 69-90 (GASR…EHTY). Disordered stretches follow at residues 1 to 22 (MPIV…ADDG) and 67 to 95 (TEGA…SCGD). The USP domain occupies 122-423 (AGLHNLGNTC…QAYVLFYLRI (302 aa)). Residue Cys131 is the Nucleophile of the active site. The active-site Proton acceptor is the His382. Phosphoserine is present on residues Ser429 and Ser464. Residues 430 to 577 (PEGLISRTGS…RQGSWDSRDV (148 aa)) form a disordered region. A compositionally biased stretch (polar residues) spans 491-503 (RNGSTLGLKSQNG). Residues 510–519 (PSGSPSPKLS) show a composition bias toward low complexity. Ser546 is subject to Phosphoserine. Residues 557-571 (SNSNSSRSGSQRQGS) show a composition bias toward low complexity. Residue Ser582 is modified to Phosphoserine. Residues 589–999 (ATANGHGLKG…ESSSCAPSAN (411 aa)) form a disordered region. Residues 597–609 (KGNDESAGLDRRG) are compositionally biased toward basic and acidic residues. The span at 610-623 (SSSSSPEHSASSDS) shows a compositional bias: low complexity. Residues 640–654 (SQETNCSTAGHSKTP) show a composition bias toward polar residues. A Phosphoserine modification is found at Ser667. Positions 669 to 681 (VLSNTTTEPASTM) are enriched in polar residues. Ser682 is subject to Phosphoserine. Residues 687 to 697 (KKLALSAKKAS) are compositionally biased toward low complexity. Phosphoserine is present on residues Ser713 and Ser742. A compositionally biased stretch (polar residues) spans 773–785 (EPRSCSSISTALP). Positions 841–850 (HGKRKRKKKK) are enriched in basic residues. Positions 891–902 (GTQPQVNGQQVG) are enriched in polar residues. Ser952 carries the phosphoserine modification. Residues 963–975 (QETQRAVEEDGHL) show a composition bias toward basic and acidic residues.

It belongs to the peptidase C19 family. Interacts with isoform 3 of FBXW7; the interaction inhibits MYC degradation induced by SCF(FBW7) complex. Interacts with NTRK1; USP36 does not deubiquitinate NTRK1. Interacts with NEDD4L (via domains WW1, 3 and 4); the interaction inhibits ubiquitination of, at least, NTRK1, KCNQ2 and KCNQ3 by NEDD4L. Interacts (via C-terminus) with EXOSC10 (via C-terminus); the interaction is facilitated by the association with RNA and promotes sumoylation of EXOSC10. Post-translationally, polyubiquitinated by NEDD4L, no effect on USP36 protein levels. Both proteins interact with and regulate each other's ubiquitination levels. As to expression, broadly expressed.

It is found in the nucleus. It localises to the nucleolus. The protein resides in the cytoplasm. The catalysed reaction is Thiol-dependent hydrolysis of ester, thioester, amide, peptide and isopeptide bonds formed by the C-terminal Gly of ubiquitin (a 76-residue protein attached to proteins as an intracellular targeting signal).. Functionally, deubiquitinase essential for the regulation of nucleolar structure and function. Required for cell and organism viability. Plays an important role in ribosomal RNA processing and protein synthesis, which is mediated, at least in part, through deubiquitination of DHX33, NPM1 and FBL, regulating their protein stability. Functions as a transcriptional repressor by deubiquiting histone H2B at the promoters of genes critical for cellular differentiation, such as CDKN1A, thereby preventing histone H3 'Lys-4' trimethylation (H3K4). Specifically deubiquitinates MYC in the nucleolus, leading to prevent MYC degradation by the proteasome: acts by specifically interacting with isoform 3 of FBXW7 (FBW7gamma) in the nucleolus and counteracting ubiquitination of MYC by the SCF(FBW7) complex. In contrast, it does not interact with isoform 1 of FBXW7 (FBW7alpha) in the nucleoplasm. Interacts to and regulates the actions of E3 ubiquitin-protein ligase NEDD4L over substrates such as NTRK1, KCNQ2 and KCNQ3, affecting their expression an functions. Deubiquitinates SOD2, regulates SOD2 protein stability. Deubiquitinase activity is required to control selective autophagy activation by ubiquitinated proteins. Promotes CEP63 stabilization through 'Lys-48'-linked deubiquitination leading to increased stability. Acts as a SUMO ligase to promote EXOSC10 sumoylation critical for the nucleolar RNA exosome function in rRNA processing. Binds to pre-rRNAs. In Homo sapiens (Human), this protein is Ubiquitin carboxyl-terminal hydrolase 36.